A 334-amino-acid chain; its full sequence is Probable aminoacyl tRNA synthase complex-interacting multifunctional protein 2 (334 aa).

The GST C-terminal domain occupies 280–327 (LDKRLQKQQYFGGSQMSVADVGVYSSLIRMPAVTEKDLTPALVAWRKR).

In terms of assembly, component of the aminoacyl-tRNA synthase complex which is comprised of a bifunctional glutamyl-prolyl-tRNA synthase, the monospecific isoleucyl, leucyl, glutaminyl, methionyl, lysyl, arginyl and aspartyl-tRNA synthases, and three auxiliary proteins.

Its subcellular location is the cytoplasm. The protein localises to the cytosol. The protein resides in the nucleus. Required for assembly and stability of the aminoacyl-tRNA synthase complex. In Drosophila melanogaster (Fruit fly), this protein is Probable aminoacyl tRNA synthase complex-interacting multifunctional protein 2.